A 514-amino-acid polypeptide reads, in one-letter code: Cytochrome bd-II ubiquinol oxidase subunit 1 (514 aa).

Topologically, residues 1 to 22 (MWDVIDLSRWQFALTALYHFLF) are cytoplasmic. H19 is a heme binding site. The chain crosses the membrane as a helical span at residues 23–42 (VPLTLGLIFLLAIMETIYVV). The Periplasmic segment spans residues 43–94 (TGKTIYRDMTRFWGKLFGINFALGVATGLTMEFQFGTNWSFYSNYVGDIFGA). The helical transmembrane segment at 95-114 (PLAMEALMAFFLESTFVGLF) threads the bilayer. The Cytoplasmic portion of the chain corresponds to 115-129 (FFGWQRLNKYQHLLV). A helical transmembrane segment spans residues 130–149 (TWLVAFGSNLSALWILNANG). The Periplasmic portion of the chain corresponds to 150-187 (WMQYPTGAHFDIDTLRMEMTSFSELVFNPVSQVKFVHT). H186 serves as a coordination point for heme. The helical transmembrane segment at 188–207 (VMAGYVTGAMFIMAISAWYL) threads the bilayer. Topologically, residues 208 to 219 (LRGRERNVALRS) are cytoplasmic. Residues 220 to 239 (FAIGSVFGTLAIIGTLQLGD) form a helical membrane-spanning segment. Residues 240–392 (SSAYEVAQVQ…VAPVFWSFRI (153 aa)) are Periplasmic-facing. Heme is bound at residue M393. Residues 393–412 (MVGCGSLLLLVMLIALVQTL) traverse the membrane as a helical segment. Topologically, residues 413–470 (RGKIDQHRWVLKMALWSLPLPWIAIEAGWFMTEFGRQPWAIQDILPTYSAHSALTTGQ) are cytoplasmic. A helical membrane pass occupies residues 471-490 (LAFSLIMIVGLYTLFLIAEV). Residues 491–514 (YLMQKYARLGPSAMQSEQPTQQQG) lie on the Periplasmic side of the membrane.

This sequence belongs to the cytochrome ubiquinol oxidase subunit 1 family. As to quaternary structure, heterodimer of subunits I and II. It depends on heme as a cofactor. Post-translationally, the N-terminus is blocked.

It localises to the cell inner membrane. The catalysed reaction is 2 a ubiquinol + O2 + n H(+)(in) = 2 a ubiquinone + 2 H2O + n H(+)(out). The protein operates within energy metabolism; oxidative phosphorylation. Inhibited by cyanide; is more sensitive to cyanide than cytochrome bd-I oxidase. Functionally, a terminal oxidase that catalyzes quinol-dependent, Na(+)-independent oxygen uptake. Prefers menadiol over other quinols although ubiquinol was not tested. Generates a proton motive force using protons and electrons from opposite sides of the membrane to generate H(2)O, transferring 1 proton/electron. This Escherichia coli (strain K12) protein is Cytochrome bd-II ubiquinol oxidase subunit 1 (appC).